The sequence spans 591 residues: MNMEITNLKSYKELVTLSAEEKTKDLKDYLNDKNRSESLIKKFKNFYMDLSRQRYSEKTLNKLVEYAEEVELKKKVEKTFMGEKVNMTENRSVLHTALRIPIEKINTHKIIIDNKNVLEDVHGVLKKIEKYSDDIRNGVIKTCKNTKFKNVICIGIGGSYLGTEFVYEAMKYYYYNMELNKNEKDQVNNFNNNYDQDNVFNVRFLANVDPNDVNRAIQNLDQYDTLVIIISKTFTTAETMLNARSIKKWLSLKIKDDENLSKHMVAVSTNLKLTDEFGISRDNVFEFWDWVGGRFSVTSSVGILPLSIAFGYKNMRNFLNGCHDMDEHFLHADLKENIPVLLALTSFYNSHFFDYKNVAILPYFQNLLKFSAHIQQLSMESNGKSVDRNNQPIHYNTCQVYFGEPGTNGQHSFYQLIHQGQVIPVELIGFKHSHFPIKFDKEVVSNHDELMTNFFAQADALAIGKTYEQVKEENEKNKMSPELLTHKVFNGNRPSTLLLFDELNFYTCGLLLSLYESRIVAEGFLLNINSFDQWGVELGKVLAKEVRNYFNDTRNQKKSDNTYNFNESTKNFIKLLLVQIKKKKKINTNLK.

E380 serves as the catalytic Proton donor. Catalysis depends on residues H411 and K540.

Belongs to the GPI family. Homodimer.

Its subcellular location is the cytoplasm. It carries out the reaction alpha-D-glucose 6-phosphate = beta-D-fructose 6-phosphate. The protein operates within carbohydrate degradation; glycolysis; D-glyceraldehyde 3-phosphate and glycerone phosphate from D-glucose: step 2/4. This Plasmodium falciparum protein is Glucose-6-phosphate isomerase (GGI.R1).